The following is a 231-amino-acid chain: Ribonuclease HII (231 aa).

The RNase H type-2 domain occupies 33–222; sequence WPVAGADEAG…FREAQEQPLA (190 aa). The a divalent metal cation site is built by Asp-39, Glu-40, and Asp-130.

This sequence belongs to the RNase HII family. The cofactor is Mn(2+). Requires Mg(2+) as cofactor.

It is found in the cytoplasm. The enzyme catalyses Endonucleolytic cleavage to 5'-phosphomonoester.. Functionally, endonuclease that specifically degrades the RNA of RNA-DNA hybrids. The sequence is that of Ribonuclease HII from Sinorhizobium fredii (strain NBRC 101917 / NGR234).